We begin with the raw amino-acid sequence, 1215 residues long: Inner capsid protein VP3 (1215 aa).

Positions 1-81 are disordered; that stretch reads MPRRPRRNAK…RVDNDGDVIT (81 aa). Residues 21–44 show a composition bias toward low complexity; sequence LVAPAANASVSSTVNTTTSPTLAA. The C2H2-type zinc finger occupies 118 to 141; that stretch reads YRCNVCNAEFPSMSAMTEHLRTSH.

It belongs to the turreted BTV-fold inner capsid family. Homodecamer; each decamer is made up of two conformers of VP2, called VP2A and VP2B. 12 homodecamers assemble to form an icosahedral capsid. Interacts with VP6.

The protein resides in the virion. In terms of biological role, inner capsid protein that self-assembles to form an icosahedral capsid with a T=2 symmetry, which consists of 120 copies of VP2, with channels at each of its five-fold vertices. This capsid constitutes the innermost concentric layer of the viral mature particle. This Ctenopharyngodon idella (Grass carp) protein is Inner capsid protein VP3 (S3).